We begin with the raw amino-acid sequence, 206 residues long: Peptidyl-tRNA hydrolase (206 aa).

Tyrosine 19 lines the tRNA pocket. Histidine 24 acts as the Proton acceptor in catalysis. Residues tyrosine 70, asparagine 72, and asparagine 118 each contribute to the tRNA site.

Belongs to the PTH family. Monomer.

The protein localises to the cytoplasm. It catalyses the reaction an N-acyl-L-alpha-aminoacyl-tRNA + H2O = an N-acyl-L-amino acid + a tRNA + H(+). In terms of biological role, hydrolyzes ribosome-free peptidyl-tRNAs (with 1 or more amino acids incorporated), which drop off the ribosome during protein synthesis, or as a result of ribosome stalling. Catalyzes the release of premature peptidyl moieties from peptidyl-tRNA molecules trapped in stalled 50S ribosomal subunits, and thus maintains levels of free tRNAs and 50S ribosomes. The chain is Peptidyl-tRNA hydrolase from Prochlorococcus marinus (strain MIT 9313).